Consider the following 421-residue polypeptide: Imidazolonepropionase (421 aa).

Residues His-81 and His-83 each coordinate Fe(3+). Residues His-81 and His-83 each coordinate Zn(2+). Arg-90, Tyr-153, and His-186 together coordinate 4-imidazolone-5-propanoate. Tyr-153 contributes to the N-formimidoyl-L-glutamate binding site. Fe(3+) is bound at residue His-251. A Zn(2+)-binding site is contributed by His-251. Position 254 (Glu-254) interacts with 4-imidazolone-5-propanoate. Asp-326 contributes to the Fe(3+) binding site. Asp-326 is a binding site for Zn(2+). 2 residues coordinate N-formimidoyl-L-glutamate: Asn-328 and Gly-330. 4-imidazolone-5-propanoate is bound at residue Ser-331.

This sequence belongs to the metallo-dependent hydrolases superfamily. HutI family. It depends on Zn(2+) as a cofactor. Fe(3+) is required as a cofactor.

It localises to the cytoplasm. It catalyses the reaction 4-imidazolone-5-propanoate + H2O = N-formimidoyl-L-glutamate. The protein operates within amino-acid degradation; L-histidine degradation into L-glutamate; N-formimidoyl-L-glutamate from L-histidine: step 3/3. Catalyzes the hydrolytic cleavage of the carbon-nitrogen bond in imidazolone-5-propanoate to yield N-formimidoyl-L-glutamate. It is the third step in the universal histidine degradation pathway. This Streptococcus pyogenes serotype M1 protein is Imidazolonepropionase.